A 292-amino-acid polypeptide reads, in one-letter code: MLRVLCLLRPWRPLRARGCASDGAAGGSEIQVRALAGPDQGITEILMNRPSARNALGNVFVSELLETLAQLREDRQVRVLLFRSGVKGVFCAGADLKEREQMSEAEVGVFVQRLRGLMNDIAAFPAPTIAAMDGFALGGGLELALACDLRVAASSAVMGLIETTRGLLPGAGGTQRLPRCLGVALAKELIFTGRRLSGTEAHVLGLVNHAVAQNEEGDAAYQRARALAQEILPQAPIAVRLGKVAIDRGTEVDIASGMAIEGMCYAQNIPTRDRLEGMAAFREKRTPKFVGK.

Residues 1–35 (MLRVLCLLRPWRPLRARGCASDGAAGGSEIQVRAL) constitute a mitochondrion transit peptide. N6-acetyllysine; alternate is present on K97. An N6-succinyllysine; alternate modification is found at K97.

This sequence belongs to the enoyl-CoA hydratase/isomerase family.

The protein resides in the mitochondrion. This Homo sapiens (Human) protein is Enoyl-CoA hydratase domain-containing protein 2, mitochondrial (ECHDC2).